A 152-amino-acid chain; its full sequence is Superoxide dismutase [Cu-Zn] (152 aa).

Positions 45, 47, and 62 each coordinate Cu cation. Cys-56 and Cys-145 are disulfide-bonded. Residues His-62, His-70, His-79, and Asp-82 each contribute to the Zn(2+) site. A Cu cation-binding site is contributed by His-119.

It belongs to the Cu-Zn superoxide dismutase family. Homodimer. Requires Cu cation as cofactor. Zn(2+) serves as cofactor.

It is found in the cytoplasm. It catalyses the reaction 2 superoxide + 2 H(+) = H2O2 + O2. Destroys radicals which are normally produced within the cells and which are toxic to biological systems. The sequence is that of Superoxide dismutase [Cu-Zn] (SODCC) from Zantedeschia aethiopica (White calla lily).